A 115-amino-acid chain; its full sequence is Large ribosomal subunit protein uL24 (115 aa).

Residues 49–68 form a disordered region; it reads NMKTKHHPPSKDQEKGSITK.

This sequence belongs to the universal ribosomal protein uL24 family. In terms of assembly, part of the 50S ribosomal subunit.

Its function is as follows. One of two assembly initiator proteins, it binds directly to the 5'-end of the 23S rRNA, where it nucleates assembly of the 50S subunit. One of the proteins that surrounds the polypeptide exit tunnel on the outside of the subunit. The chain is Large ribosomal subunit protein uL24 from Phytoplasma australiense.